The chain runs to 289 residues: MGNQFKTLALLAALSGLLIAISYWVIGGSSGLIIGIGLAAVTNLLSWYQSDKIALAVYRAQPVSESQAPRLYRMVQRLSQRANIPMPGVYIVPGQTANAFATGRDPEHAAVAVTEGILNILPEDELEAVIAHELTHIINRDTLTQAVAATVAGAISFLAQMVSYSLWFGGIGGRDNERGGNPLGVLLTVVLAPIAATIIQLAISRTREFSADAGSARLTGNPRALARALQRLEAAARQIPLNANPAFEPLLIINSISGQFLGNLFSSHPSTEARVQALLKLEKQLPTIA.

The next 2 helical transmembrane spans lie at 8–28 (LALL…VIGG) and 29–49 (SSGL…SWYQ). Residue His132 coordinates Zn(2+). Residue Glu133 is part of the active site. His136 is a binding site for Zn(2+). 2 consecutive transmembrane segments (helical) span residues 151–171 (VAGA…FGGI) and 183–203 (LGVL…QLAI). Residue Glu208 participates in Zn(2+) binding.

Belongs to the peptidase M48B family. The cofactor is Zn(2+).

The protein resides in the cell inner membrane. In Trichormus variabilis (strain ATCC 29413 / PCC 7937) (Anabaena variabilis), this protein is Protease HtpX homolog.